The sequence spans 1123 residues: Inner tegument protein (1123 aa).

Disordered regions lie at residues 1–27 (MADR…GPMQ) and 1047–1123 (RPLA…TSYQ). The tract at residues 568-1123 (WDITPTTPAT…PTDLPLTSYQ (556 aa)) is interaction with large tegument protein.

This sequence belongs to the herpesviridae inner tegument protein family. As to quaternary structure, interacts (via C-terminus) with the large tegument protein/LTP (via N-terminus). Interacts with host DST. Interacts with host RIGI; this interaction inhibits RIGI activation. Interacts with host CGAS; this interaction inhibits host CGAS activation. Interacts with host TAOK3.

It localises to the virion tegument. The protein localises to the host cytoplasm. The protein resides in the host nucleus. It is found in the host Golgi apparatus. Its subcellular location is the host trans-Golgi network. It catalyses the reaction L-asparaginyl-[protein] + H2O = L-aspartyl-[protein] + NH4(+). The catalysed reaction is L-glutaminyl-[protein] + H2O = L-glutamyl-[protein] + NH4(+). Its function is as follows. Plays an essential role in cytoplasmic secondary envelopment during viral egress. Interacts with the capsid via the large tegument protein/LTP and participates in its transport to the host trans-Golgi network (TGN) where secondary envelopment occurs. Modulates tegumentation and capsid accumulation at the viral assembly complex. Plays a role in microtubule-based retrograde axonal transport to promote neuroinvasion. Also plays a role in the inhibition of host immune response by acting as a viral deamidase. Deamidates host RIGI on two asparagines which becomes unable to sense viral dsRNA. In turn, its ability to trigger antiviral immune response and restrict viral replication is inhibited. Also deamidates a critical asparagine on host CGAS which abolishes cGAMP synthesis and downstream innate immune activation. In Homo sapiens (Human), this protein is Inner tegument protein (UL37).